The chain runs to 226 residues: Thiopurine S-methyltransferase (226 aa).

Residues tryptophan 10, leucine 47, glutamate 68, and arginine 130 each coordinate S-adenosyl-L-methionine.

This sequence belongs to the class I-like SAM-binding methyltransferase superfamily. TPMT family.

The protein localises to the cytoplasm. It catalyses the reaction S-adenosyl-L-methionine + a thiopurine = S-adenosyl-L-homocysteine + a thiopurine S-methylether.. This Shewanella sediminis (strain HAW-EB3) protein is Thiopurine S-methyltransferase.